Here is a 75-residue protein sequence, read N- to C-terminus: MNSKYLFVFLILIVTFTDLCQGFLVGILPRMRGFITPFLKKVRGRRELGSQYDYLQDFRKRELDLDDLLSKFPDY.

An N-terminal signal peptide occupies residues 1-22 (MNSKYLFVFLILIVTFTDLCQG). Arginine amide is present on arginine 43. The propeptide occupies 47 to 75 (ELGSQYDYLQDFRKRELDLDDLLSKFPDY).

This sequence belongs to the non-disulfide-bridged peptide (NDBP) superfamily. Short antimicrobial peptide (group 4) family. In terms of tissue distribution, expressed by the venom gland.

It is found in the secreted. The protein is Peptide Ctri10033 of Chaerilus tricostatus (Scorpion).